Reading from the N-terminus, the 488-residue chain is Glutamyl-tRNA(Gln) amidotransferase subunit A (488 aa).

Active-site charge relay system residues include lysine 77 and serine 152. The active-site Acyl-ester intermediate is serine 176.

Belongs to the amidase family. GatA subfamily. Heterotrimer of A, B and C subunits.

The enzyme catalyses L-glutamyl-tRNA(Gln) + L-glutamine + ATP + H2O = L-glutaminyl-tRNA(Gln) + L-glutamate + ADP + phosphate + H(+). Its function is as follows. Allows the formation of correctly charged Gln-tRNA(Gln) through the transamidation of misacylated Glu-tRNA(Gln) in organisms which lack glutaminyl-tRNA synthetase. The reaction takes place in the presence of glutamine and ATP through an activated gamma-phospho-Glu-tRNA(Gln). This is Glutamyl-tRNA(Gln) amidotransferase subunit A from Streptococcus pyogenes serotype M12 (strain MGAS2096).